The following is a 501-amino-acid chain: Cryptochrome-1 (501 aa).

Residues 5–134 (KKTIVWFRRD…SVQSYNGDLC (130 aa)) form the Photolyase/cryptochrome alpha/beta domain. FAD is bound by residues Y231 and 243 to 247 (TSLLS). R356 contributes to the ATP binding site. FAD-binding residues include D386 and D388. D405 provides a ligand contact to ATP.

The protein belongs to the DNA photolyase class-1 family. In terms of assembly, homodimer. FAD is required as a cofactor. The cofactor is (6R)-5,10-methylene-5,6,7,8-tetrahydrofolate.

Its function is as follows. Mediates blue light-induced gene expression in addition to its role in blue light-dependent inhibition of stem growth. The chain is Cryptochrome-1 (PHR1) from Sinapis alba (White mustard).